The primary structure comprises 244 residues: Phosphoribosyl isomerase A (244 aa).

Asp-10 (proton acceptor) is an active-site residue. The Proton donor role is filled by Asp-129.

It belongs to the HisA/HisF family.

The protein resides in the cytoplasm. The catalysed reaction is 1-(5-phospho-beta-D-ribosyl)-5-[(5-phospho-beta-D-ribosylamino)methylideneamino]imidazole-4-carboxamide = 5-[(5-phospho-1-deoxy-D-ribulos-1-ylimino)methylamino]-1-(5-phospho-beta-D-ribosyl)imidazole-4-carboxamide. It catalyses the reaction N-(5-phospho-beta-D-ribosyl)anthranilate = 1-(2-carboxyphenylamino)-1-deoxy-D-ribulose 5-phosphate. The protein operates within amino-acid biosynthesis; L-histidine biosynthesis; L-histidine from 5-phospho-alpha-D-ribose 1-diphosphate: step 4/9. It functions in the pathway amino-acid biosynthesis; L-tryptophan biosynthesis; L-tryptophan from chorismate: step 3/5. Its function is as follows. Involved in both the histidine and tryptophan biosynthetic pathways. The sequence is that of Phosphoribosyl isomerase A from Mycobacterium ulcerans (strain Agy99).